A 124-amino-acid chain; its full sequence is MIAKTAVALALVASAVALRPTMSLSANRREVVAGAGAAAVVAPMLRPAEANAVYTRGTSLSAPVITIFDARGCTDHANKEYKGDWSGRAEDDECCVKIQMQKISVAEDVARLVRLECLNELKSK.

Arg-71 serves as a coordination point for (2R,3E)-phycocyanobilin. Mesobiliverdin is bound by residues Cys-73, Tyr-81, and Lys-97.

The protein belongs to the phycoerythrin family. Heterotetramer of 2 different alpha chains and 2 identical beta chains which form 2 alpha-beta heterodimers within the heterotetramer. Contains one phycocyanobilin chromophore and one mesobiliverdin chromophore with binding mediated by both the alpha and beta subunits.

The protein resides in the plastid. It localises to the chloroplast thylakoid membrane. Light-harvesting photosynthetic tetrapyrrole chromophore-protein from the phycobiliprotein complex. This is Phycocyanin PC645 alpha-3 subunit from Chroomonas sp. (strain CCMP270).